A 240-amino-acid polypeptide reads, in one-letter code: Ditrans,polycis-undecaprenyl-diphosphate synthase ((2E,6E)-farnesyl-diphosphate specific) (240 aa).

The active site involves D18. Mg(2+) is bound at residue D18. Residues 19 to 22 (GNGR), W23, R31, H35, and 63 to 65 (SSE) contribute to the substrate site. N66 (proton acceptor) is an active-site residue. Substrate-binding positions include W67, R69, R186, and 192–194 (RIS). E205 contributes to the Mg(2+) binding site.

The protein belongs to the UPP synthase family. Homodimer. It depends on Mg(2+) as a cofactor.

The catalysed reaction is 8 isopentenyl diphosphate + (2E,6E)-farnesyl diphosphate = di-trans,octa-cis-undecaprenyl diphosphate + 8 diphosphate. Catalyzes the sequential condensation of isopentenyl diphosphate (IPP) with (2E,6E)-farnesyl diphosphate (E,E-FPP) to yield (2Z,6Z,10Z,14Z,18Z,22Z,26Z,30Z,34E,38E)-undecaprenyl diphosphate (di-trans,octa-cis-UPP). UPP is the precursor of glycosyl carrier lipid in the biosynthesis of bacterial cell wall polysaccharide components such as peptidoglycan and lipopolysaccharide. The chain is Ditrans,polycis-undecaprenyl-diphosphate synthase ((2E,6E)-farnesyl-diphosphate specific) from Pasteurella multocida (strain Pm70).